Consider the following 128-residue polypeptide: Glycine cleavage system H protein (128 aa).

In terms of domain architecture, Lipoyl-binding spans 22–104; that stretch reads TALVGVTDYA…YASGWLVKIK (83 aa). Residue Lys-63 is modified to N6-lipoyllysine.

It belongs to the GcvH family. In terms of assembly, the glycine cleavage system is composed of four proteins: P, T, L and H. (R)-lipoate serves as cofactor.

Functionally, the glycine cleavage system catalyzes the degradation of glycine. The H protein shuttles the methylamine group of glycine from the P protein to the T protein. The sequence is that of Glycine cleavage system H protein from Halothermothrix orenii (strain H 168 / OCM 544 / DSM 9562).